The following is a 148-amino-acid chain: Snaclec B1 (148 aa).

Residues 1–24 (MGRIIFVSFGLLVVFLSLSGTGAA) form the signal peptide. Cystine bridges form between Cys27/Cys38, Cys55/Cys144, and Cys121/Cys136. The C-type lectin domain maps to 34–145 (YDQHCYKVFD…CRLLGHFVCK (112 aa)).

Belongs to the snaclec family. Heterodimer; disulfide-linked. In terms of tissue distribution, expressed by the venom gland.

The protein resides in the secreted. Interferes with one step of hemostasis (modulation of platelet aggregation, or coagulation cascade, for example). The sequence is that of Snaclec B1 from Macrovipera lebetinus (Levantine viper).